Here is a 230-residue protein sequence, read N- to C-terminus: Orotidine 5'-phosphate decarboxylase (230 aa).

Substrate is bound by residues aspartate 11, lysine 34, 61–70 (DLKLHDIPNT), threonine 117, arginine 179, glutamine 188, glycine 208, and arginine 209. Lysine 63 functions as the Proton donor in the catalytic mechanism.

Belongs to the OMP decarboxylase family. Type 1 subfamily. As to quaternary structure, homodimer.

It carries out the reaction orotidine 5'-phosphate + H(+) = UMP + CO2. It participates in pyrimidine metabolism; UMP biosynthesis via de novo pathway; UMP from orotate: step 2/2. Its function is as follows. Catalyzes the decarboxylation of orotidine 5'-monophosphate (OMP) to uridine 5'-monophosphate (UMP). This Streptococcus sanguinis (strain SK36) protein is Orotidine 5'-phosphate decarboxylase.